Reading from the N-terminus, the 686-residue chain is Probable metal-nicotianamine transporter YSL4 (686 aa).

14 consecutive transmembrane segments (helical) span residues 27–47, 53–73, 96–116, 151–171, 203–223, 264–284, 308–328, 373–393, 405–425, 441–461, 488–508, 554–574, 596–616, and 629–649; these read WLVT…FCFV, MMTG…FFLL, MFLI…GFAT, FFLI…IMII, VMTI…QWFY, IVNF…YPYL, VFIS…ILVT, IPMF…MVAM, VGVL…ATGL, IFAA…VSGI, AMIA…PCIF, CVEL…LVLV, FFAG…LLLW, and AAVA…SALL.

This sequence belongs to the YSL (TC 2.A.67.2) family.

Its subcellular location is the membrane. In terms of biological role, may be involved in the transport of nicotianamine-chelated metals. The protein is Probable metal-nicotianamine transporter YSL4 (YSL4) of Oryza sativa subsp. japonica (Rice).